Reading from the N-terminus, the 366-residue chain is Transaldolase (366 aa).

The Schiff-base intermediate with substrate role is filled by Lys-140.

It belongs to the transaldolase family. Type 2 subfamily.

It localises to the cytoplasm. The catalysed reaction is D-sedoheptulose 7-phosphate + D-glyceraldehyde 3-phosphate = D-erythrose 4-phosphate + beta-D-fructose 6-phosphate. It participates in carbohydrate degradation; pentose phosphate pathway; D-glyceraldehyde 3-phosphate and beta-D-fructose 6-phosphate from D-ribose 5-phosphate and D-xylulose 5-phosphate (non-oxidative stage): step 2/3. In terms of biological role, transaldolase is important for the balance of metabolites in the pentose-phosphate pathway. The protein is Transaldolase of Saccharopolyspora erythraea (strain ATCC 11635 / DSM 40517 / JCM 4748 / NBRC 13426 / NCIMB 8594 / NRRL 2338).